A 3412-amino-acid polypeptide reads, in one-letter code: MAGKAILKGKGGGPPRRVSKETAKKTRQSRVQMPNGLVLMRMMGILWHAVAGTARSPVLKSFWKSVPLKQATAALRKIKKAVSTLMVGLQRRGKRRSAVDWTGWLLVVVLLGVTLAATVRKERDGTTVIRAEGKDAATQVRVENGTCVILATDMGSWCDDSLTYECVTIDQGEEPVDVDCSCRNVDGVYLEYGRCGKQEGSRTRRSVLIPSHAQGDLTGRGHKWLEGDSLRTHLTRVEGWVWKNKVLTLAVIAVVWLTVESVVTRVAVVVVLLCLAPVYASRCTHLENRDFVTGTQGTTRVTLVLELGGCVTITAEGKPSMDVWLDSIYQENPAKTREYCLHAKLSDTKVAARCPTMGPATLAEEHQSGTVCKRDQSDRGWGNHCGLFGKGSIVTCVKASCEAKKKATGHVYDANKIVYTVKVEPHTGDYVAANETHSGRKTASFTVSSERTILTMGDYGDVSLLCRVASGVDLAQTVILELDKTSEHLPTAWQVHRDWFNDLALPWKHEGAQNWNNAERLVEFGAPHAVKMDVYNLGDQTGVLLKSLAGVPVAHIDGTKYHLKSGHVTCEVGLEKLKMKGLTYTMCDKTKFTWKRIPTDSGHDTVVMEVAFSGTKPCRIPVRAVAHGSPDVNVAMLMTPNPTIENNGGGFIEMQLPPGDNIIYVGELSHQWFQKGSSIGRVFQKTRKGIERLTVIGEHAWDFGSTGGFLTSVGKALHTVLGGAFNSLFGGVGFLPKILVGVVLAWLGLNMRNPTMSMSFLLAGGLVLAMTLGVGADVGCAVDTERMELRCGEGLVVWREVSEWYDNYAYYPETLGALASAIKETFEEGTCGIVPQNRLEMAMWRSSATELNLALVEGDANLTVVVDKLDPTDYRGGIPSLLKKGKDIKVSWKSWGHSMIWSVPEAPRLFMVGTEGSSECPLERRKTGVFTVAEFGVGLRTKVFLDFRQESTHECDTGVMGAAVKNGMAVHTDQSLWMKSVRNDTGTYIVELLVTDLRNCSWPASHTIDNAEVVDSELFLPASLAGPRSWYNRIPGYSEQVKGPWKYSPIRVTREECPGTRVTINADCDKRGASVRSTTESGKVIPEWCCRTCTLPPVTFRTGTDCWYAMEIRPVHDQGGLVRSMVVADNGELLSEGGIPGIVALFVVLEYVIRRRPATGTTAMWGGIVVLALLVTGLVKIESLVRYVVAVGITFHLELGPEIVALTLLQAVFELRVGLLSAFALRSNLTVREMVTIYFLLLVLELGLPSEGLGALWKWGDALAMGALIFRACTAEEKTGVGLLLMALMTQQDLATVHYGLMLFLGVASCCSIWKLIRGHREQKGLTWIVPLAGLLGGEGSGVRLVAFWELTVHGRRRSFSEPLTVVGVMLTLASGMIRHTSQEALCALAVASFLLLMLVLGTRKMQLVAEWSGCVEWHPELMNEGGEVSLRVRQDSMGNFHLTELEKEERVMAFWLLAGLAASAFHWSGILGVMGLWTLSEMLRTARRSGLVFSGQGGRERGDRPFEVKDGVYRIFSPGLLWGQRQVGVGYGSKGVLHTMWHVTRGAALSIDDAVAGPYWADVKEDVVCYGGAWSLEEKWKGETVQVHAFPPGRAHEVHQCQPGELLLDTGRRIGAVPIDLAKGTSGSPILNSQGVVVGLYGNGLKTNETYVSSIAQGEAEKSRPNLPPAVTGTGWTAKGQITVLDMHPGSGKTHRVLPELIRQCIDRRLRTLVLAPTRVVLKEMERALNGKRVRFHSPAVGDQQVGGSIVDVMCHATYVNRRLLPQGRQNWEVAIMDEAHWTDPHSIAARGHLYTLAKENKCALVLMTATPPGKSEPFPESNGAISSEEKQIPDGEWRDGFDWITEYEGRTAWFVPSSAKGGIIARTLIQKGKSVICLNSKTFEKDYSRVRDEKPDFVVTTDISEMGANLDVSRVIDGRTNIKPEEVDGRVELTGTRRVTTASAAQRRGRVGRQEGRTDEYIYSGQCDDDDSGLVQWKEAQILLDNITTLRGPVATFYGPEQDKMPEVAGHFRLTEEKRKHFRHLLTHCDFTPWLAWHVAANVSSVTSRNWTWEGPEENTVDEANGDLVTFRSPNGAERTLRPVWRDARMFREGRDIREFVAYASGRRSFGDVLSGMSGVPELLRHRCVSAMDVFYTLMHEEPGSRAMKMAERDAPEAFLTVVEMMVLGLATLGVVWCFVVRTSISRMMLGTLVLLASLALLWAGGVSYGNMAGVALIFYTLLTVLQPEAGKQRSSDDNKLAYFLLTLCSLAGLVAANEMGFLEKTKADLSTVLWSEHEELRSWEEWTNIDIQPARSWGTYVLVVSLFTPYIIHQLQTKIQQLVNSAVATGAQAMRDLGGGAPFFGVAGHVMALGVVSLVGATPTSLVVGVGLAAFHLAIVVSGLEAELTQRAHKVFFSAMVRNPMVDGDVINPFGEGEAKPALYERKMSLVLAIVLCLMSVVMNRTVPSTPRLLLWDWRQRDNCSNQRRTPFGRCQACGLSGVVRGSLWGFCPLGHRLWLRASGSRRGGSEGDTLGDLWKRKLNGCTKEEFFAYRRTGILETERDKARELLKRGETNMGLAVSRGTAKLAWLEERGYATLKGEVVDLGCGRGGWSYYAASRPAVMSVKACAIAGKGHETPKMVTSLGWNLIKFRAGMDVFSMQPHRADTIMCDIGESNPDAVVEGERTRKVILLMEQWKNRNPTATCVFKALAPYRPEVTEALHRFQLQWGGGLVRTPFSRNSTHEMYYSTAITGNIVNSVNIQSRKLLARFGDQRGPTRVPELDLGVGTRCVVLAEDKVKEKDVQERISALREQYGETWHMDREHPYRTWQYWAATACANRVGGALINGVVKLLSWPWNAREDVVRMAMTDTTAFGQQRVFKEKVDTKAQEPQPGTKVIMRAVNDWILERLARKSKPRMCSREEFIAKVKSNAALGAWSDEQNRWSSAKEAVEDPAFWQLVDEERERHLAGRCAHCVYNMMGKREKKLGEFGVAKGSRAIWYMWLGSRFLEFEALGFLNEDHWASRGSSGSGVEGISLNYLGWHLKGLSTLEGGLFYADDTAGWDTKVTNADLEDEEQLLRYMEGEHKQLAATIMQKAYHAKVVKVARPSRDGGCIMDVITRRDQRGSGQVVTYALNTLTNIKVQLIRMMEGEGVIEASDAHNPRLLRVERWLRDHGEERLGRMLVSGDDCVVRPVDDRFSGALYFLNDMAKTRKDIGEWDHSVGFSNWEEVPFCSHHFHELVMKDGRTLIVPCRDQDELVGRARVSPGCGRSVRETACLSKAYGQMWLLSYFHRRDLRTLGLAICSAVPVDWVPAGRTTWSIHASGAWMTTEDMLDVWNRVWILDNPFMHSKEKIAEWRDVPYLPKSHDMLCSSLVGRKERAEWAKNIWGAVEKVRKMIGQEKFKDYLSCMDRHDLHWESKLESSII.

The interval 1–30 (MAGKAILKGKGGGPPRRVSKETAKKTRQSR) is disordered. Topologically, residues 1-98 (MAGKAILKGK…LQRRGKRRSA (98 aa)) are cytoplasmic. Residues 97–117 (SAVDWTGWLLVVVLLGVTLAA) constitute a propeptide, ER anchor for the capsid protein C, removed in mature form by serine protease NS3. The helical transmembrane segment at 99 to 119 (VDWTGWLLVVVLLGVTLAATV) threads the bilayer. At 120-242 (RKERDGTTVI…HLTRVEGWVW (123 aa)) the chain is on the extracellular side. Asn144 is a glycosylation site (N-linked (GlcNAc...) asparagine; by host). The chain crosses the membrane as a helical span at residues 243–260 (KNKVLTLAVIAVVWLTVE). Ser261 is a topological domain (cytoplasmic). Residues 262-280 (VVTRVAVVVVLLCLAPVYA) traverse the membrane as a helical segment. At 281 to 727 (SRCTHLENRD…HTVLGGAFNS (447 aa)) the chain is on the extracellular side. 6 disulfides stabilise this stretch: Cys283-Cys310, Cys340-Cys396, Cys340-Cys401, Cys354-Cys385, Cys372-Cys396, and Cys372-Cys401. Residues 378-391 (DRGWGNHCGLFGKG) are fusion peptide. Asn434 carries N-linked (GlcNAc...) asparagine; by host glycosylation. Disulfide bonds link Cys466–Cys570 and Cys587–Cys618. A helical membrane pass occupies residues 728–748 (LFGGVGFLPKILVGVVLAWLG). At 749–755 (LNMRNPT) the chain is on the cytoplasmic side. The chain crosses the membrane as a helical span at residues 756 to 776 (MSMSFLLAGGLVLAMTLGVGA). The Extracellular segment spans residues 777–1187 (DVGCAVDTER…LVKIESLVRY (411 aa)). Cystine bridges form between Cys780–Cys791, Cys831–Cys920, Cys955–Cys1000, Cys1057–Cys1106, Cys1068–Cys1090, and Cys1089–Cys1093. Residues Asn861, Asn983, and Asn999 are each glycosylated (N-linked (GlcNAc...) asparagine; by host). A helical membrane pass occupies residues 1188–1208 (VVAVGITFHLELGPEIVALTL). Topologically, residues 1209-1236 (LQAVFELRVGLLSAFALRSNLTVREMVT) are cytoplasmic. The helical transmembrane segment at 1237 to 1257 (IYFLLLVLELGLPSEGLGALW) threads the bilayer. The Lumenal segment spans residues 1258 to 1293 (KWGDALAMGALIFRACTAEEKTGVGLLLMALMTQQD). The chain crosses the membrane as a helical span at residues 1294 to 1314 (LATVHYGLMLFLGVASCCSIW). The Cytoplasmic portion of the chain corresponds to 1315–1327 (KLIRGHREQKGLT). A helical transmembrane segment spans residues 1328–1348 (WIVPLAGLLGGEGSGVRLVAF). Over 1349 to 1359 (WELTVHGRRRS) the chain is Cytoplasmic. The helical transmembrane segment at 1360–1378 (FSEPLTVVGVMLTLASGMI) threads the bilayer. The Lumenal portion of the chain corresponds to 1379–1382 (RHTS). The chain crosses the membrane as a helical span at residues 1383 to 1403 (QEALCALAVASFLLLMLVLGT). Topologically, residues 1404–1454 (RKMQLVAEWSGCVEWHPELMNEGGEVSLRVRQDSMGNFHLTELEKEERVMA) are cytoplasmic. The interval 1410 to 1449 (AEWSGCVEWHPELMNEGGEVSLRVRQDSMGNFHLTELEKE) is interacts with and activates NS3 protease. An intramembrane region (helical) is located at residues 1455 to 1475 (FWLLAGLAASAFHWSGILGVM). The Cytoplasmic segment spans residues 1476–2160 (GLWTLSEMLR…KMAERDAPEA (685 aa)). The Peptidase S7 domain maps to 1490–1669 (SGLVFSGQGG…EAEKSRPNLP (180 aa)). Residues His1543, Asp1567, and Ser1627 each act as charge relay system; for serine protease NS3 activity in the active site. The Helicase ATP-binding domain occupies 1675 to 1831 (TGWTAKGQIT…ESNGAISSEE (157 aa)). 1688-1695 (MHPGSGKT) is an ATP binding site. The DEAH box motif lies at 1779–1782 (DEAH). The Helicase C-terminal domain maps to 1841-2000 (DGFDWITEYE…TLRGPVATFY (160 aa)). Residue Lys1883 is modified to N6-acetyllysine; by host. The chain crosses the membrane as a helical span at residues 2161-2181 (FLTVVEMMVLGLATLGVVWCF). Over 2182-2189 (VVRTSISR) the chain is Lumenal. The helical intramembrane region spans 2190-2210 (MMLGTLVLLASLALLWAGGVS). Tyr2211 is a topological domain (lumenal). The helical transmembrane segment at 2212–2232 (GNMAGVALIFYTLLTVLQPEA) threads the bilayer. Residues 2233-2244 (GKQRSSDDNKLA) are Cytoplasmic-facing. A helical transmembrane segment spans residues 2245–2265 (YFLLTLCSLAGLVAANEMGFL). Over 2266–2299 (EKTKADLSTVLWSEHEELRSWEEWTNIDIQPARS) the chain is Lumenal. Positions 2300–2320 (WGTYVLVVSLFTPYIIHQLQT) form an intramembrane region, helical. Over 2321–2343 (KIQQLVNSAVATGAQAMRDLGGG) the chain is Lumenal. An intramembrane region (helical) is located at residues 2344 to 2364 (APFFGVAGHVMALGVVSLVGA). Over 2365–2368 (TPTS) the chain is Lumenal. A helical membrane pass occupies residues 2369–2389 (LVVGVGLAAFHLAIVVSGLEA). The Cytoplasmic portion of the chain corresponds to 2390-2430 (ELTQRAHKVFFSAMVRNPMVDGDVINPFGEGEAKPALYERK). Residues 2431–2451 (MSLVLAIVLCLMSVVMNRTVP) traverse the membrane as a helical segment. Over 2452–2476 (STPRLLLWDWRQRDNCSNQRRTPFG) the chain is Lumenal. A helical membrane pass occupies residues 2477-2497 (RCQACGLSGVVRGSLWGFCPL). Topologically, residues 2498 to 3412 (GHRLWLRASG…WESKLESSII (915 aa)) are cytoplasmic. The 265-residue stretch at 2511–2775 (GGSEGDTLGD…ELDLGVGTRC (265 aa)) folds into the mRNA cap 0-1 NS5-type MT domain. Ser2566 lines the S-adenosyl-L-methionine pocket. Ser2566 carries the post-translational modification Phosphoserine. Lys2571 acts as the For 2'-O-MTase activity in catalysis. S-adenosyl-L-methionine-binding residues include Gly2596, Trp2597, Ile2615, Asp2641, and Val2642. The active-site For 2'-O-MTase activity is Asp2656. Ile2657 provides a ligand contact to S-adenosyl-L-methionine. Catalysis depends on for 2'-O-MTase activity residues Lys2693 and Glu2729. The interaction with host SCRIB stretch occupies residues 2729–2733 (EMYYS). Tyr2731 is a binding site for S-adenosyl-L-methionine. Zn(2+) is bound by residues Glu2948, His2952, Cys2957, and Cys2960. A RdRp catalytic domain is found at 3038–3187 (GLFYADDTAG…RPVDDRFSGA (150 aa)). Zn(2+) contacts are provided by His3222, Cys3238, and Cys3357.

This sequence in the N-terminal section; belongs to the class I-like SAM-binding methyltransferase superfamily. mRNA cap 0-1 NS5-type methyltransferase family. Homodimer. Interacts (via N-terminus) with host EXOC1 (via C-terminus); this interaction results in EXOC1 degradation through the proteasome degradation pathway. As to quaternary structure, forms heterodimers with envelope protein E in the endoplasmic reticulum and Golgi. In terms of assembly, homodimer; in the endoplasmic reticulum and Golgi. Interacts with protein prM. Interacts with non-structural protein 1. Homodimer; Homohexamer when secreted. Interacts with envelope protein E. As to quaternary structure, interacts (via N-terminus) with serine protease NS3. In terms of assembly, forms a heterodimer with serine protease NS3. May form homooligomers. Forms a heterodimer with NS2B. Interacts with non-structural protein 2A (via N-terminus). Interacts with NS4B. Interacts with unphosphorylated RNA-directed RNA polymerase NS5; this interaction stimulates RNA-directed RNA polymerase NS5 guanylyltransferase activity. As to quaternary structure, interacts with serine protease NS3. Interacts with NS1. In terms of assembly, homodimer. Interacts with host STAT2; this interaction inhibits the phosphorylation of the latter, and, when all viral proteins are present (polyprotein), targets STAT2 for degradation. Interacts with serine protease NS3. Interacts with host SCRIB; this interaction targets NS5 to the cell membrane periphery and nucleus, thereby allowing efficient host nuclear STAT1 inhibition. Post-translationally, specific enzymatic cleavages in vivo yield mature proteins. Cleavages in the lumen of endoplasmic reticulum are performed by host signal peptidase, whereas cleavages in the cytoplasmic side are performed by serine protease NS3. Signal cleavage at the 2K-4B site requires a prior NS3 protease-mediated cleavage at the 4A-2K site. In terms of processing, cleaved in post-Golgi vesicles by a host furin, releasing the mature small envelope protein M, and peptide pr. This cleavage is incomplete as up to 30% of viral particles still carry uncleaved prM. N-glycosylated. Post-translationally, N-glycosylated. The excreted form is glycosylated and this is required for efficient secretion of the protein from infected cells. In terms of processing, acetylated by host KAT5. Acetylation modulates NS3 RNA-binding and unwinding activities and plays an important positive role for viral replication. Phosphorylated on serines residues. This phosphorylation may trigger NS5 nuclear localization.

It is found in the virion. The protein localises to the host nucleus. It localises to the host cytoplasm. The protein resides in the host perinuclear region. Its subcellular location is the secreted. It is found in the virion membrane. The protein localises to the host endoplasmic reticulum membrane. The enzyme catalyses Selective hydrolysis of -Xaa-Xaa-|-Yaa- bonds in which each of the Xaa can be either Arg or Lys and Yaa can be either Ser or Ala.. The catalysed reaction is RNA(n) + a ribonucleoside 5'-triphosphate = RNA(n+1) + diphosphate. It carries out the reaction a ribonucleoside 5'-triphosphate + H2O = a ribonucleoside 5'-diphosphate + phosphate + H(+). It catalyses the reaction ATP + H2O = ADP + phosphate + H(+). The enzyme catalyses a 5'-end (5'-triphosphoguanosine)-ribonucleoside in mRNA + S-adenosyl-L-methionine = a 5'-end (N(7)-methyl 5'-triphosphoguanosine)-ribonucleoside in mRNA + S-adenosyl-L-homocysteine. The catalysed reaction is a 5'-end (N(7)-methyl 5'-triphosphoguanosine)-ribonucleoside in mRNA + S-adenosyl-L-methionine = a 5'-end (N(7)-methyl 5'-triphosphoguanosine)-(2'-O-methyl-ribonucleoside) in mRNA + S-adenosyl-L-homocysteine + H(+). In terms of biological role, plays a role in virus budding by binding to the cell membrane and gathering the viral RNA into a nucleocapsid that forms the core of a mature virus particle. During virus entry, may induce genome penetration into the host cytoplasm after hemifusion induced by the surface proteins. Can migrate to the cell nucleus where it modulates host functions. Functionally, inhibits RNA silencing by interfering with host Dicer. Its function is as follows. Prevents premature fusion activity of envelope proteins in trans-Golgi by binding to envelope protein E at pH6.0. After virion release in extracellular space, gets dissociated from E dimers. Acts as a chaperone for envelope protein E during intracellular virion assembly by masking and inactivating envelope protein E fusion peptide. prM is the only viral peptide matured by host furin in the trans-Golgi network probably to avoid catastrophic activation of the viral fusion activity in acidic Golgi compartment prior to virion release. prM-E cleavage is inefficient, and many virions are only partially matured. These uncleaved prM would play a role in immune evasion. In terms of biological role, may play a role in virus budding. Exerts cytotoxic effects by activating a mitochondrial apoptotic pathway through M ectodomain. May display a viroporin activity. Functionally, binds to host cell surface receptor and mediates fusion between viral and cellular membranes. Envelope protein is synthesized in the endoplasmic reticulum in the form of heterodimer with protein prM. They play a role in virion budding in the ER, and the newly formed immature particle is covered with 60 spikes composed of heterodimer between precursor prM and envelope protein E. The virion is transported to the Golgi apparatus where the low pH causes dissociation of PrM-E heterodimers and formation of E homodimers. prM-E cleavage is inefficient, and many virions are only partially matured. These uncleaved prM would play a role in immune evasion. Its function is as follows. Involved in immune evasion, pathogenesis and viral replication. Once cleaved off the polyprotein, is targeted to three destinations: the viral replication cycle, the plasma membrane and the extracellular compartment. Essential for viral replication. Required for formation of the replication complex and recruitment of other non-structural proteins to the ER-derived membrane structures. Excreted as a hexameric lipoparticle that plays a role against host immune response. Antagonizing the complement function. Binds to the host macrophages and dendritic cells. Inhibits signal transduction originating from Toll-like receptor 3 (TLR3). Component of the viral RNA replication complex that functions in virion assembly and antagonizes the host immune response. In terms of biological role, required cofactor for the serine protease function of NS3. May have membrane-destabilizing activity and form viroporins. Functionally, displays three enzymatic activities: serine protease, NTPase and RNA helicase. NS3 serine protease, in association with NS2B, performs its autocleavage and cleaves the polyprotein at dibasic sites in the cytoplasm: C-prM, NS2A-NS2B, NS2B-NS3, NS3-NS4A, NS4A-2K and NS4B-NS5. NS3 RNA helicase binds RNA and unwinds dsRNA in the 3' to 5' direction. Its function is as follows. Regulates the ATPase activity of the NS3 helicase activity. NS4A allows NS3 helicase to conserve energy during unwinding. Functions as a signal peptide for NS4B and is required for the interferon antagonism activity of the latter. In terms of biological role, induces the formation of ER-derived membrane vesicles where the viral replication takes place. Inhibits interferon (IFN)-induced host STAT1 phosphorylation and nuclear translocation, thereby preventing the establishment of cellular antiviral state by blocking the IFN-alpha/beta pathway. Inhibits STAT2 translocation in the nucleus after IFN-alpha treatment. Functionally, replicates the viral (+) and (-) genome, and performs the capping of genomes in the cytoplasm. NS5 methylates viral RNA cap at guanine N-7 and ribose 2'-O positions. Besides its role in RNA genome replication, also prevents the establishment of cellular antiviral state by blocking the interferon-alpha/beta (IFN-alpha/beta) signaling pathway. Inhibits host TYK2 and STAT2 phosphorylation, thereby preventing activation of JAK-STAT signaling pathway. The chain is Genome polyprotein from Homo sapiens (Human).